Here is a 671-residue protein sequence, read N- to C-terminus: MEPIEQQLTELRTTLRHHEYLYHVMDAPEIPDAEYDRLMRELRELEAQRPDLITPDSPTQRVGAAPLTAFNQIRHEVPMLSLDNVFDEESFLAFNKRVQDRLKSTENVIWCCELKLDGLAVSILYENGVLVSAATRGDGTTGEDITSNVRTIRAIPLKLHGDNIPARLEVRGEVFLPQAGFEKINEDARRTGGKVFANPRNAAAGSLRQLDPRITAKRPLTFFCYGVGILEGGELPDTHLGRLLQFKAWGLPVSDRVTLCDSPQAVLDFYRNVEKDRPTLGFDIDGVVIKVNSLVLQEQLGFVARAPRWAVAFKFPAQEQMTFVRDVEFQVGRTGAITPVARLEPVQVAGVLVSNATLHNADEIERLGLRIGDKVVIRRAGDVIPQVVNVVLSERPEETRPIVFPTHCPVCGSDVERVEGEAVTRCTGGLICGAQRKESLKHFVSRRAMDVDGMGDKIIDQLVEREYVHTPADLFRLTAGKLTGLDRMGPKSAQNVVNALEKAKATTFARFLYALGIREVGEATAAGLAAYFGTLEALQTATIDELQKVPDVGIVVATHVFNFFAEESNRDVIGQLLAEGVHWPAPVVINVQEIDSPFAGKTVVLTGSLSQMSRDDAKARLAALGAKVAGSVSKKTDLVIAGEAAGSKLAKAQELGITVIDEAEMIRLLGA.

Residues 32-36, 81-82, and Glu-113 each bind NAD(+); these read DAEYD and SL. The N6-AMP-lysine intermediate role is filled by Lys-115. Arg-136, Glu-173, Lys-290, and Lys-314 together coordinate NAD(+). Positions 408, 411, 426, and 432 each coordinate Zn(2+). One can recognise a BRCT domain in the interval 593–671; the sequence is EIDSPFAGKT…EAEMIRLLGA (79 aa).

Belongs to the NAD-dependent DNA ligase family. LigA subfamily. Mg(2+) is required as a cofactor. It depends on Mn(2+) as a cofactor.

The enzyme catalyses NAD(+) + (deoxyribonucleotide)n-3'-hydroxyl + 5'-phospho-(deoxyribonucleotide)m = (deoxyribonucleotide)n+m + AMP + beta-nicotinamide D-nucleotide.. DNA ligase that catalyzes the formation of phosphodiester linkages between 5'-phosphoryl and 3'-hydroxyl groups in double-stranded DNA using NAD as a coenzyme and as the energy source for the reaction. It is essential for DNA replication and repair of damaged DNA. The polypeptide is DNA ligase (Salmonella dublin (strain CT_02021853)).